The chain runs to 379 residues: Lactosylceramide 1,3-N-acetyl-beta-D-glucosaminyltransferase A (379 aa).

Topologically, residues 1 to 12 are cytoplasmic; the sequence is MFMNCRRVKKWH. The helical; Signal-anchor for type II membrane protein transmembrane segment at 13 to 30 threads the bilayer; sequence FLQLLSMCCVMSVLMVCW. Residues 31-379 lie on the Lumenal side of the membrane; that stretch reads EHVDHHVVSH…NTYSCMAAFT (349 aa). N-linked (GlcNAc...) asparagine glycans are attached at residues Asn57, Asn113, Asn168, and Asn277.

It belongs to the glycosyltransferase 31 family.

Its subcellular location is the golgi apparatus membrane. It carries out the reaction a beta-D-Gal-(1-&gt;4)-beta-D-Glc-(1&lt;-&gt;1)-Cer(d18:1(4E)) + UDP-N-acetyl-alpha-D-glucosamine = a beta-D-GlcNAc-(1-&gt;3)-beta-D-Gal-(1-&gt;4)-beta-D-Glc-(1&lt;-&gt;1)-Cer(d18:1(4E)) + UDP + H(+). The catalysed reaction is a neolactoside nLc4Cer(d18:1(4E)) + UDP-N-acetyl-alpha-D-glucosamine = a neolactoside IV(3)-beta-GlcNAc-nLc4Cer(d18:1(4E)) + UDP + H(+). The protein operates within protein modification; protein glycosylation. Its function is as follows. Beta-1,3-N-acetylglucosaminyltransferase that plays a key role in the synthesis of lacto- or neolacto-series carbohydrate chains on glycolipids. The chain is Lactosylceramide 1,3-N-acetyl-beta-D-glucosaminyltransferase A (b3gnt5a) from Danio rerio (Zebrafish).